The primary structure comprises 741 residues: Eukaryotic translation initiation factor 3 subunit B (741 aa).

Residues 1-10 are compositionally biased toward polar residues; the sequence is MAPSFDTLSE. The tract at residues 1–22 is disordered; sequence MAPSFDTLSEQDLHEEEEEEID. Over residues 13–22 the composition is skewed to acidic residues; that stretch reads LHEEEEEEID. The RRM domain occupies 40–126; the sequence is TFVVIDGLPV…HTLLVNKLMD (87 aa). 5 WD repeats span residues 193-230, 232-289, 303-344, 514-557, and 572-610; these read AHWT…KQKQ, PHPF…RSFV, QPKK…LLGK, IEKK…EKPE, and LEHY…HTFS. Residues 695 to 722 are disordered; that stretch reads KDAYGLPEDVDDPKKAKDAPAVTSEQGE.

It belongs to the eIF-3 subunit B family. As to quaternary structure, component of the eukaryotic translation initiation factor 3 (eIF-3) complex.

Its subcellular location is the cytoplasm. Functionally, RNA-binding component of the eukaryotic translation initiation factor 3 (eIF-3) complex, which is involved in protein synthesis of a specialized repertoire of mRNAs and, together with other initiation factors, stimulates binding of mRNA and methionyl-tRNAi to the 40S ribosome. The eIF-3 complex specifically targets and initiates translation of a subset of mRNAs involved in cell proliferation. This is Eukaryotic translation initiation factor 3 subunit B (prt1) from Aspergillus clavatus (strain ATCC 1007 / CBS 513.65 / DSM 816 / NCTC 3887 / NRRL 1 / QM 1276 / 107).